The primary structure comprises 365 residues: Phospho-N-acetylmuramoyl-pentapeptide-transferase (365 aa).

Helical transmembrane passes span 22–42, 74–94, 95–115, 133–153, 168–188, 201–221, 240–260, 267–287, 292–312, and 342–362; these read YISVRIIMISITSLLITLALG, TMGGVLILSSVIISCLLWGDL, TSIYLWILILVVIFFGAIGFF, YKFALQSIFSIVLAIVLFYLL, SLYIPIGIVIFVVLAFFIING, GLAIVPVVLVAAGLGIYAYIE, LAEVAVFCAAVCGSGLAFLWF, VFMGDVGSLTLGAVLGVIAVM, LIFFIMGLLFVVEALSVMLQV, and KVVIRFWIISLILFLIGLAAI.

The protein belongs to the glycosyltransferase 4 family. MraY subfamily. The cofactor is Mg(2+).

Its subcellular location is the cell inner membrane. The catalysed reaction is UDP-N-acetyl-alpha-D-muramoyl-L-alanyl-gamma-D-glutamyl-meso-2,6-diaminopimeloyl-D-alanyl-D-alanine + di-trans,octa-cis-undecaprenyl phosphate = di-trans,octa-cis-undecaprenyl diphospho-N-acetyl-alpha-D-muramoyl-L-alanyl-D-glutamyl-meso-2,6-diaminopimeloyl-D-alanyl-D-alanine + UMP. The protein operates within cell wall biogenesis; peptidoglycan biosynthesis. Catalyzes the initial step of the lipid cycle reactions in the biosynthesis of the cell wall peptidoglycan: transfers peptidoglycan precursor phospho-MurNAc-pentapeptide from UDP-MurNAc-pentapeptide onto the lipid carrier undecaprenyl phosphate, yielding undecaprenyl-pyrophosphoryl-MurNAc-pentapeptide, known as lipid I. In Francisella tularensis subsp. tularensis (strain FSC 198), this protein is Phospho-N-acetylmuramoyl-pentapeptide-transferase.